Here is an 893-residue protein sequence, read N- to C-terminus: Eukaryotic translation initiation factor 3 subunit A (893 aa).

The region spanning leucine 319–threonine 502 is the PCI domain. Coiled coils occupy residues glutamine 576–arginine 707 and glutamate 784–alanine 881. Disordered stretches follow at residues alanine 592–alanine 634 and alanine 837–glutamine 893. Residues alanine 837–alanine 881 show a composition bias toward basic and acidic residues.

Belongs to the eIF-3 subunit A family. In terms of assembly, component of the eukaryotic translation initiation factor 3 (eIF-3) complex. The eIF-3 complex interacts with pix.

It localises to the cytoplasm. In terms of biological role, RNA-binding component of the eukaryotic translation initiation factor 3 (eIF-3) complex, which is involved in protein synthesis of a specialized repertoire of mRNAs and, together with other initiation factors, stimulates binding of mRNA and methionyl-tRNAi to the 40S ribosome. The eIF-3 complex specifically targets and initiates translation of a subset of mRNAs involved in cell proliferation. The polypeptide is Eukaryotic translation initiation factor 3 subunit A (Drosophila grimshawi (Hawaiian fruit fly)).